The chain runs to 361 residues: 3-dehydroquinate synthase (361 aa).

Residues 71 to 76, 105 to 109, 129 to 130, Lys142, and Lys151 contribute to the NAD(+) site; these read DGEQYK, GVIGD, and TT. Zn(2+)-binding residues include Glu184, His247, and His264.

Belongs to the sugar phosphate cyclases superfamily. Dehydroquinate synthase family. Co(2+) serves as cofactor. It depends on Zn(2+) as a cofactor. NAD(+) is required as a cofactor.

The protein localises to the cytoplasm. It carries out the reaction 7-phospho-2-dehydro-3-deoxy-D-arabino-heptonate = 3-dehydroquinate + phosphate. The protein operates within metabolic intermediate biosynthesis; chorismate biosynthesis; chorismate from D-erythrose 4-phosphate and phosphoenolpyruvate: step 2/7. Its function is as follows. Catalyzes the conversion of 3-deoxy-D-arabino-heptulosonate 7-phosphate (DAHP) to dehydroquinate (DHQ). The chain is 3-dehydroquinate synthase from Pectobacterium atrosepticum (strain SCRI 1043 / ATCC BAA-672) (Erwinia carotovora subsp. atroseptica).